Here is a 480-residue protein sequence, read N- to C-terminus: tRNA-2-methylthio-N(6)-dimethylallyladenosine synthase (480 aa).

The MTTase N-terminal domain occupies 29–145 (GSFWIQTFGC…LEALLTQVDN (117 aa)). [4Fe-4S] cluster-binding residues include Cys-38, Cys-74, Cys-108, Cys-180, Cys-184, and Cys-187. Residues 166 to 403 (RDSTICAWVN…NALVERVALQ (238 aa)) form the Radical SAM core domain. In terms of domain architecture, TRAM spans 406–474 (SRYSGKVEQV…AFSLSGTPCD (69 aa)).

This sequence belongs to the methylthiotransferase family. MiaB subfamily. Monomer. The cofactor is [4Fe-4S] cluster.

Its subcellular location is the cytoplasm. The catalysed reaction is N(6)-dimethylallyladenosine(37) in tRNA + (sulfur carrier)-SH + AH2 + 2 S-adenosyl-L-methionine = 2-methylsulfanyl-N(6)-dimethylallyladenosine(37) in tRNA + (sulfur carrier)-H + 5'-deoxyadenosine + L-methionine + A + S-adenosyl-L-homocysteine + 2 H(+). Its function is as follows. Catalyzes the methylthiolation of N6-(dimethylallyl)adenosine (i(6)A), leading to the formation of 2-methylthio-N6-(dimethylallyl)adenosine (ms(2)i(6)A) at position 37 in tRNAs that read codons beginning with uridine. The protein is tRNA-2-methylthio-N(6)-dimethylallyladenosine synthase of Prochlorococcus marinus (strain MIT 9303).